The chain runs to 597 residues: Siderophore iron transporter 2 (597 aa).

Ser46 bears the Phosphoserine mark. The next 14 helical transmembrane spans lie at 65 to 85, 97 to 117, 131 to 151, 159 to 179, 190 to 210, 225 to 245, 281 to 301, 312 to 332, 357 to 377, 390 to 410, 419 to 439, 448 to 468, 485 to 505, and 558 to 578; these read IIVA…EQQT, FSAH…LAVV, SESL…LAFS, VAYI…QLII, ILSA…PVLA, YGIW…SLFL, LDGL…LPFS, TILT…LCFY, VLIF…TSFL, LTLN…GFLM, LLMI…LFGI, LVLV…SAQI, LYLT…GGVW, and KDLF…LVII.

The protein belongs to the major facilitator superfamily.

The protein resides in the membrane. In terms of biological role, involved in the transport of siderophore iron and so has a role in iron homeostasis. This chain is Siderophore iron transporter 2 (str2), found in Schizosaccharomyces pombe (strain 972 / ATCC 24843) (Fission yeast).